The following is a 200-amino-acid chain: Probable molybdenum cofactor guanylyltransferase (200 aa).

GTP contacts are provided by residues Leu9 to Gly11, Lys21, Asp69, and Asp100. A Mg(2+)-binding site is contributed by Asp100.

This sequence belongs to the MobA family. The cofactor is Mg(2+).

It is found in the cytoplasm. The catalysed reaction is Mo-molybdopterin + GTP + H(+) = Mo-molybdopterin guanine dinucleotide + diphosphate. Functionally, transfers a GMP moiety from GTP to Mo-molybdopterin (Mo-MPT) cofactor (Moco or molybdenum cofactor) to form Mo-molybdopterin guanine dinucleotide (Mo-MGD) cofactor. This is Probable molybdenum cofactor guanylyltransferase from Bacillus cereus (strain Q1).